The primary structure comprises 398 residues: Inositol polyphosphate 5-phosphatase (398 aa).

This sequence belongs to the inositol 1,4,5-trisphosphate 5-phosphatase type II family. In terms of tissue distribution, expressed in tail, cilia, dendrites, axon and male head.

It localises to the cytoplasm. Functionally, dephosphorylates a number of phosphatidylinositols. Controls the cellular levels and subcellular distribution of phosphatidylinositol 3,5-bisphosphate and phosphatidylinositol 3,4,5-trisphosphate. Has a role in sperm activation and motility. Influences the localization of the transient receptor potential polycystin (TRPP) complex proteins lov-1 and pkd-2. The protein is Inositol polyphosphate 5-phosphatase of Caenorhabditis elegans.